Reading from the N-terminus, the 1732-residue chain is MPEPWGTVYFLGIAQVFSFLFSWWNLEGVMNQADAPRPLNWTIRKLCHAAFLPSVRLLKAQKSWIERAFYKRECVHIIPSTKDPHRCCCGRLIGQHVGLTPSISVLQNEKNESRLSRNDIQSEKWSISKHTQLSPTDAFGTIEFQGGGHSNKAMYVRVSFDTKPDLLLHLMTKEWQLELPKLLISVHGGLQNFELQPKLKQVFGKGLIKAAMTTGAWIFTGGVNTGVIRHVGDALKDHASKSRGKICTIGIAPWGIVENQEDLIGRDVVRPYQTMSNPMSKLTVLNSMHSHFILADNGTTGKYGAEVKLRRQLEKHISLQKINTRCLPFFSLDSRLFYSFWGSCQLDSVGIGQGVPVVALIVEGGPNVISIVLEYLRDTPPVPVVVCDGSGRASDILAFGHKYSEEGGLINESLRDQLLVTIQKTFTYTRTQAQHLFIILMECMKKKELITVFRMGSEGHQDIDLAILTALLKGANASAPDQLSLALAWNRVDIARSQIFIYGQQWPVGSLEQAMLDALVLDRVDFVKLLIENGVSMHRFLTISRLEELYNTRHGPSNTLYHLVRDVKKGNLPPDYRISLIDIGLVIEYLMGGAYRCNYTRKRFRTLYHNLFGPKRPKALKLLGMEDDIPLRRGRKTTKKREEEVDIDLDDPEINHFPFPFHELMVWAVLMKRQKMALFFWQHGEEAMAKALVACKLCKAMAHEASENDMVDDISQELNHNSRDFGQLAVELLDQSYKQDEQLAMKLLTYELKNWSNATCLQLAVAAKHRDFIAHTCSQMLLTDMWMGRLRMRKNSGLKVILGILLPPSILSLEFKNKDDMPYMSQAQEIHLQEKEAEEPEKPTKEKEEEDMELTAMLGRNNGESSRKKDEEEVQSKHRLIPLGRKIYEFYNAPIVKFWFYTLAYIGYLMLFNYIVLVKMERWPSTQEWIVISYIFTLGIEKMREILMSEPGKLLQKVKVWLQEYWNVTDLIAILLFSVGMILRLQDQPFRSDGRVIYCVNIIYWYIRLLDIFGVNKYLGPYVMMIGKMMIDMMYFVIIMLVVLMSFGVARQAILFPNEEPSWKLAKNIFYMPYWMIYGEVFADQIDPPCGQNETREDGKIIQLPPCKTGAWIVPAIMACYLLVANILLVNLLIAVFNNTFFEVKSISNQVWKFQRYQLIMTFHERPVLPPPLIIFSHMTMIFQHLCCRWRKHESDPDERDYGLKLFITDDELKKVHDFEEQCIEEYFREKDDRFNSSNDERIRVTSERVENMSMRLEEVNEREHSMKASLQTVDIRLAQLEDLIGRMATALERLTGLERAESNKIRSRTSSDCTDAAYIVRQSSFNSQEGNTFKLQESIDPAGEETMSPTSPTLMPRMRSHSFYSVNMKDKGGIEKLESIFKERSLSLHRATSSHSVAKEPKAPAAPANTLAIVPDSRRPSSCIDIYVSAMDELHCDIDPLDNSVNILGLGEPSFSTPVPSTAPSSSAYATLAPTDRPPSRSIDFEDITSMDTRSFSSDYTHLPECQNPWDSEPPMYHTIERSKSSRYLATTPFLLEEAPIVKSHSFMFSPSRSYYANFGVPVKTAEYTSITDCIDTRCVNAPQAIADRAAFPGGLGDKVEDLTCCHPEREAELSHPSSDSEENEAKGRRATIAISSQEGDNSERTLSNNITVPKIERANSYSAEEPSAPYAHTRKSFSISDKLDRQRNTASLRNPFQRSKSSKPEGRGDSLSMRRLSRTSAFQSFESKHN.

At 1 to 894 (MPEPWGTVYF…RKIYEFYNAP (894 aa)) the chain is on the cytoplasmic side. Calmodulin-binding regions lie at residues 192–215 (NFEL…MTTG), 300–323 (TGKY…QKIN), 601–624 (RKRF…KLLG), and 793–816 (RKNS…LEFK). Residues 617-625 (PKALKLLGM) are required for the inhibitory action of G-beta/gamma-subunits of heterotrimeric G-proteins. A 1,2-dioctanoyl-sn-glycero-3-phospho-(1D-myo-inositol-4,5-bisphosphate)-binding site is contributed by serine 796. The chain crosses the membrane as a helical span at residues 895–918 (IVKFWFYTLAYIGYLMLFNYIVLV). At 919 to 925 (KMERWPS) the chain is on the extracellular side. Residues 926–948 (TQEWIVISYIFTLGIEKMREILM) traverse the membrane as a helical segment. Residues 949 to 964 (SEPGKLLQKVKVWLQE) lie on the Cytoplasmic side of the membrane. The chain crosses the membrane as a helical span at residues 965–985 (YWNVTDLIAILLFSVGMILRL). The Extracellular portion of the chain corresponds to 986–989 (QDQP). Residues 990 to 1013 (FRSDGRVIYCVNIIYWYIRLLDIF) traverse the membrane as a helical segment. Topologically, residues 1014 to 1028 (GVNKYLGPYVMMIGK) are cytoplasmic. Residues lysine 1017 and tyrosine 1018 each contribute to the 1,2-dioctanoyl-sn-glycero-3-phospho-(1D-myo-inositol-4,5-bisphosphate) site. The helical transmembrane segment at 1029–1056 (MMIDMMYFVIIMLVVLMSFGVARQAILF) threads the bilayer. The Extracellular portion of the chain corresponds to 1057–1111 (PNEEPSWKLAKNIFYMPYWMIYGEVFADQIDPPCGQNETREDGKIIQLPPCKTGA). Residues 1112–1137 (WIVPAIMACYLLVANILLVNLLIAVF) traverse the membrane as a helical segment. The Cytoplasmic segment spans residues 1138 to 1732 (NNTFFEVKSI…AFQSFESKHN (595 aa)). Residues 1241 to 1301 (ERIRVTSERV…LERLTGLERA (61 aa)) adopt a coiled-coil conformation. Over residues 1459–1476 (PVPSTAPSSSAYATLAPT) the composition is skewed to low complexity. 2 disordered regions span residues 1459–1478 (PVPS…PTDR) and 1611–1732 (REAE…SKHN). Composition is skewed to polar residues over residues 1635-1653 (AISS…NNIT), 1690-1701 (NTASLRNPFQRS), and 1720-1732 (RTSA…SKHN).

This sequence belongs to the transient receptor (TC 1.A.4) family. LTrpC subfamily. TRPM3 sub-subfamily. As to quaternary structure, homotetramer. Interacts with TRPM1; the interaction results in the formation of a heteromultimeric cation channel complex that are functionally different from the homomeric channels. In terms of tissue distribution, expressed primarily in the kidney and, at lower levels, in brain, testis, ovary, pancreas and spinal cord. Expression in the brain and kidney was determined at protein level. In the kidney, expressed predominantly in the collecting tubular epithelium in the medulla, medullary rays, and periglomerular regions; in the brain, highest levels are found in the cerebellum, choroid plexus, the locus coeruleus, the posterior thalamus and the substantia nigra. Down-regulated in renal tumors compared to normal kidney. Expressed in the lens.

It localises to the cell membrane. It carries out the reaction Ca(2+)(in) = Ca(2+)(out). It catalyses the reaction Mn(2+)(in) = Mn(2+)(out). The catalysed reaction is Zn(2+)(in) = Zn(2+)(out). The enzyme catalyses Mg(2+)(in) = Mg(2+)(out). Its activity is regulated as follows. Activated by the neurosteroid pregnelonone sulfate (PregS); PregS activates the channel by shifting its current-voltage activation curve toward more negative membrane potentials and also potentiates temperature-induced activation. Activated by sphingosine. Activated by heat. Intracellular Ca(2+) inhibits TRPM3 probably via interaction with Ca(2+)/calmodulin. Intracellular Mg(2+) inhibits TRPM3 activity. Both intracellular and extracellular protons block TRPM3 through propable binding sites in the pore region. Positively regulated by phosphoinositide phosphoinositol 4,5-biphosphate (PI(4,5)P2). Strongly inhibited by activation of G(i)-coupled receptors via direct binding with G-betagamma-subunits of heterotrimeric G-proteins. Functionally, constitutively active, non-selective divalent cation-conducting channel that is permeable to Ca(2+), Mn(2+), and Mg(2+), with a high permeability for Ca(2+). However, can be enhanced by increasing temperature and by ligands, including the endogenous neurosteroid pregnenolone sulfate and sphingosine-1 and suppressed by intracellular Mg(2+). Implicated in a variety of cellular processes, including insulin/peptide secretion, vascular constriction and dilation, noxious heat sensing, inflammatory and spontaneous pain sensitivity. In neurons of the dorsal root ganglia, functions as thermosensitive channel for the detection of noxious heat and spontaneous pain. Suggested to function as an ionotropic steroid receptor in beta-cell, indeed pregnenolone sulfate leads to Ca(2+) influx and enhanced insulin secretion. Mediates Zn(2+) uptake into the lumen of pancreatic beta cell secretory granules, thereby regulating insulin secretion. Forms heteromultimeric ion channels with TRPM1 which are permeable for Ca(2+) and Zn(2+) ions. Exists as multiple splice variants which differ significantly in their biophysical properties. The protein is Transient receptor potential cation channel subfamily M member 3 of Homo sapiens (Human).